The chain runs to 125 residues: UPF0593 mitochondrial protein C806.05 (125 aa).

This sequence belongs to the UPF0593 family.

It is found in the mitochondrion. This chain is UPF0593 mitochondrial protein C806.05, found in Schizosaccharomyces pombe (strain 972 / ATCC 24843) (Fission yeast).